The chain runs to 145 residues: Large ribosomal subunit protein uL15 (145 aa).

2 stretches are compositionally biased toward basic residues: residues 1–13 (MIRK…KQRG) and 22–33 (TKKRRGAGHRGG). The disordered stretch occupies residues 1–41 (MIRKTKKIRKQRGSRSVGGGCTKKRRGAGHRGGRGQAGGNK).

This sequence belongs to the universal ribosomal protein uL15 family. As to quaternary structure, part of the 50S ribosomal subunit.

Binds to the 23S rRNA. This is Large ribosomal subunit protein uL15 from Methanosphaera stadtmanae (strain ATCC 43021 / DSM 3091 / JCM 11832 / MCB-3).